The following is a 726-amino-acid chain: Peroxisomal fatty acid beta-oxidation multifunctional protein (726 aa).

It in the N-terminal section; belongs to the enoyl-CoA hydratase/isomerase family. In the central section; belongs to the 3-hydroxyacyl-CoA dehydrogenase family. In terms of assembly, monomer.

Its subcellular location is the peroxisome. It localises to the cytoplasm. The protein localises to the cytoskeleton. The enzyme catalyses a (3S)-3-hydroxyacyl-CoA = a (2E)-enoyl-CoA + H2O. It carries out the reaction a 4-saturated-(3S)-3-hydroxyacyl-CoA = a (3E)-enoyl-CoA + H2O. It catalyses the reaction a (3Z)-enoyl-CoA = a 4-saturated (2E)-enoyl-CoA. The catalysed reaction is a (3E)-enoyl-CoA = a 4-saturated (2E)-enoyl-CoA. The enzyme catalyses (3S)-3-hydroxybutanoyl-CoA = (3R)-3-hydroxybutanoyl-CoA. It carries out the reaction a (3S)-3-hydroxyacyl-CoA + NAD(+) = a 3-oxoacyl-CoA + NADH + H(+). It functions in the pathway lipid metabolism; fatty acid beta-oxidation. Functionally, multifunctional enzyme involved in fatty acid beta-oxidation. Also binds to RNA and microtubules. Possible role in subcellular mRNA localization and RNA-cytoskeleton interactions. This chain is Peroxisomal fatty acid beta-oxidation multifunctional protein (MFP), found in Oryza sativa subsp. japonica (Rice).